The sequence spans 1230 residues: ATP-dependent helicase/nuclease subunit A (1230 aa).

Positions 3 to 473 constitute a UvrD-like helicase ATP-binding domain; the sequence is TKFTKNQQRA…IDLADNFRSQ (471 aa). 24–31 lines the ATP pocket; sequence ASAGSGKT. One can recognise a UvrD-like helicase C-terminal domain in the interval 500 to 782; the sequence is EAKLVPKAAY…RIMTIHASKG (283 aa).

It belongs to the helicase family. AddA subfamily. In terms of assembly, heterodimer of AddA and AddB/RexB. Mg(2+) serves as cofactor.

It catalyses the reaction Couples ATP hydrolysis with the unwinding of duplex DNA by translocating in the 3'-5' direction.. The enzyme catalyses ATP + H2O = ADP + phosphate + H(+). The heterodimer acts as both an ATP-dependent DNA helicase and an ATP-dependent, dual-direction single-stranded exonuclease. Recognizes the chi site generating a DNA molecule suitable for the initiation of homologous recombination. The AddA nuclease domain is required for chi fragment generation; this subunit has the helicase and 3' -&gt; 5' nuclease activities. The protein is ATP-dependent helicase/nuclease subunit A of Leuconostoc mesenteroides subsp. mesenteroides (strain ATCC 8293 / DSM 20343 / BCRC 11652 / CCM 1803 / JCM 6124 / NCDO 523 / NBRC 100496 / NCIMB 8023 / NCTC 12954 / NRRL B-1118 / 37Y).